Here is a 273-residue protein sequence, read N- to C-terminus: Dermonecrotic toxin LvSicTox-alphaIC1ai (273 aa).

H5 is an active-site residue. Residues E25 and D27 each contribute to the Mg(2+) site. H41 (nucleophile) is an active-site residue. 2 disulfides stabilise this stretch: C45–C51 and C47–C190. Residue D85 participates in Mg(2+) binding.

This sequence belongs to the arthropod phospholipase D family. Class II subfamily. Requires Mg(2+) as cofactor. Expressed by the venom gland.

It localises to the secreted. The enzyme catalyses an N-(acyl)-sphingosylphosphocholine = an N-(acyl)-sphingosyl-1,3-cyclic phosphate + choline. The catalysed reaction is an N-(acyl)-sphingosylphosphoethanolamine = an N-(acyl)-sphingosyl-1,3-cyclic phosphate + ethanolamine. It carries out the reaction a 1-acyl-sn-glycero-3-phosphocholine = a 1-acyl-sn-glycero-2,3-cyclic phosphate + choline. It catalyses the reaction a 1-acyl-sn-glycero-3-phosphoethanolamine = a 1-acyl-sn-glycero-2,3-cyclic phosphate + ethanolamine. In terms of biological role, dermonecrotic toxins cleave the phosphodiester linkage between the phosphate and headgroup of certain phospholipids (sphingolipid and lysolipid substrates), forming an alcohol (often choline) and a cyclic phosphate. This toxin acts on sphingomyelin (SM). It may also act on ceramide phosphoethanolamine (CPE), lysophosphatidylcholine (LPC) and lysophosphatidylethanolamine (LPE), but not on lysophosphatidylserine (LPS), and lysophosphatidylglycerol (LPG). It acts by transphosphatidylation, releasing exclusively cyclic phosphate products as second products. Induces dermonecrosis, hemolysis, increased vascular permeability, edema, inflammatory response, and platelet aggregation. The polypeptide is Dermonecrotic toxin LvSicTox-alphaIC1ai (Loxosceles variegata (Recluse spider)).